Here is a 1516-residue protein sequence, read N- to C-terminus: MEPGSDDFLPPPECPVFEPSWAEFRDPLGYIAKIRPIAEKSGICKIRPPADWQPPFAVEVDNFRFTPRIQRLNELEIVVEEGGYEAICKDRRWARVAQRLNYPPGKNIGSLLRSHYERIVYPYEMYQSGANLVQCNTRPFDNEEKDKEYKPHSIPLRQSVQPSKFNSYGRRAKRLQPDPEPTEEDIEKNPELKKLQIYGAGPKMMGLGLMAKDKTLRKKDKEGPECPPTVVVKEESGGDVKVESTSPKTFLESKEELSHSPEPCTKMTMRLRRNHSNAQFIESYVCRMCSRGDEDDKLLLCDGCDDNYHIFCLLPPLPEIPKGVWRCPKCVMAECKRPPEAFGFEQATREYTLQSFGEMADSFKADYSNMPVHMVPTELVEKEFWRLVNSIEEDVTVEYGADIHSKEFGSGFPVSDSKRHLTPEEEEYATSGWNLNVMPVLEQSVLCHINADISGMKVPWLYVGMVFSAFCWHIEDHWSYSINYLHWGEPKTWYGVPSLAAEHLEEVMKKLTPELFDSQPDLLHQLVTLMNPNTLMSHGVPVVRTNQCAGEFVITFPRAYHSGFNQGYNFAEAVNFCTADWLPAGRQCIEHYRRLRRYCVFSHEELICKMAACPEKLDLNLAAAVHKEMFIMVQEERRLRKALLEKGITEAEREAFELLPDDERQCIKCKTTCFLSALACYDCPDGLVCLSHINDLCKCSSSRQYLRYRYTLDELPAMLHKLKVRAESFDTWANKVRVALEVEDGRKRSLEELRALESEARERRFPNSELLQRLKNCLSEAEACVSRALGLVSGQEAGPHRVAGLQMTLAELRAFLDQMNNLPCAMHQIGDVKGILEQVEAYQAEAREALASLPSSPGLLQSLLERGRQLGVEVPEAQQLQRQVEQARWLDEVKRTLAPSARRGTLAVMRGLLVAGASVAPSPAVDKAQAELQELLTIAERWEEKAHLCLEARQKHPPATLEAIIHEAENIPVHLPNIQALKEALAKARAWIADVDEIQNGDHYPCLDDLEGLVAVGRDLPVGLEELRQLELQVLTAHSWREKASKTFLKKNSCYTLLEVLCPCADAGSDSTKRSRWMEKELGLYKSDTELLGLSAQDLRDPGSVIVAFKEGEQKEKEGILQLRRTNSAKPSPLASPNTSSSATSICVCGQVPAGVGALQCDLCQDWFHGRCVSVPRLLSSPRPSPTSSPLLAWWEWDTKFLCPLCMRSRRPRLETILALLVALQRLPVRLPEGEALQCLTERAISWQGRARQALAFEDVTALLGRLAELRQRLQAEPRPEEPPTYPSTPAFDPLREGSGKDMPKVQGLLENGDSVTSPEKVAPGEGSDLELLSSLLPQLTGPVLELPEATRAPLEELMLEGDLLEVTLDENHSIWQLLQAGKPPDLARIRTLLELEKAERHGSRARGRALERRRRRKVDRGGEGDDPAREELEPKRVRSSWPEAEEAHEEEELEEETGGEGPPQPLPATGSPSTQENQNGLEPALGASSGSSVPFSTLTPRLHMSCPQQPPQQQL.

The JmjN domain occupies 14–55 (CPVFEPSWAEFRDPLGYIAKIRPIAEKSGICKIRPPADWQPP). The ARID domain maps to 24-128 (FRDPLGYIAK…IVYPYEMYQS (105 aa)). Residues 142-151 (NEEKDKEYKP) show a composition bias toward basic and acidic residues. The tract at residues 142–186 (NEEKDKEYKPHSIPLRQSVQPSKFNSYGRRAKRLQPDPEPTEEDI) is disordered. Polar residues predominate over residues 156–166 (LRQSVQPSKFN). Residues Lys-164, Lys-188, Lys-203, and Lys-233 each participate in a glycyl lysine isopeptide (Lys-Gly) (interchain with G-Cter in SUMO2) cross-link. The segment at 216 to 262 (LRKKDKEGPECPPTVVVKEESGGDVKVESTSPKTFLESKEELSHSPE) is disordered. Residues 232-242 (VKEESGGDVKV) are compositionally biased toward basic and acidic residues. Residue Ser-246 is modified to Phosphoserine. Lys-254 participates in a covalent cross-link: Glycyl lysine isopeptide (Lys-Gly) (interchain with G-Cter in SUMO2). 2 positions are modified to phosphoserine: Ser-260 and Ser-276. Residues 283–333 (SYVCRMCSRGDEDDKLLLCDGCDDNYHIFCLLPPLPEIPKGVWRCPKCVMA) form a PHD-type 1 zinc finger. Residue Tyr-399 participates in 2-oxoglutarate binding. Residues 427–593 (EYATSGWNLN…AGRQCIEHYR (167 aa)) enclose the JmjC domain. Fe cation is bound by residues His-473 and Glu-475. 3 residues coordinate 2-oxoglutarate: Ser-481, Asn-483, and Lys-491. A Fe cation-binding site is contributed by His-561. A C5HC2 zinc finger spans residues 666 to 718 (CIKCKTTCFLSALACYDCPDGLVCLSHINDLCKCSSSRQYLRYRYTLDELPAM). Residues Ser-852 and Ser-856 each carry the phosphoserine modification. Lys-1086 is covalently cross-linked (Glycyl lysine isopeptide (Lys-Gly) (interchain with G-Cter in SUMO2)). The PHD-type 2 zinc finger occupies 1144–1209 (TSICVCGQVP…KFLCPLCMRS (66 aa)). Residues 1274–1305 (LQAEPRPEEPPTYPSTPAFDPLREGSGKDMPK) form a disordered region. The span at 1294–1304 (PLREGSGKDMP) shows a compositional bias: basic and acidic residues. A Phosphoserine modification is found at Ser-1318. The tract at residues 1400 to 1516 (ERHGSRARGR…CPQQPPQQQL (117 aa)) is disordered. Residues 1404–1419 (SRARGRALERRRRRKV) are compositionally biased toward basic residues. A compositionally biased stretch (basic and acidic residues) spans 1420–1437 (DRGGEGDDPAREELEPKR). Residues 1444 to 1459 (EAEEAHEEEELEEETG) are compositionally biased toward acidic residues. 2 stretches are compositionally biased toward polar residues: residues 1471-1481 (GSPSTQENQNG) and 1489-1500 (SSGSSVPFSTLT).

Belongs to the JARID1 histone demethylase family. In terms of assembly, part of two distinct complexes, one containing E2F6, and the other containing REST. Interacts with ZMYND8. The cofactor is Fe(2+).

It localises to the nucleus. It catalyses the reaction N(6),N(6),N(6)-trimethyl-L-lysyl(4)-[histone H3] + 3 2-oxoglutarate + 3 O2 = L-lysyl(4)-[histone H3] + 3 formaldehyde + 3 succinate + 3 CO2. In terms of biological role, histone demethylase that specifically demethylates 'Lys-4' of histone H3, thereby playing a central role in histone code. Does not demethylate histone H3 'Lys-9', H3 'Lys-27', H3 'Lys-36', H3 'Lys-79' or H4 'Lys-20'. Demethylates trimethylated and dimethylated but not monomethylated H3 'Lys-4'. Participates in transcriptional repression of neuronal genes by recruiting histone deacetylases and REST at neuron-restrictive silencer elements. The protein is Lysine-specific demethylase 5C (KDM5C) of Sus scrofa (Pig).